The following is a 101-amino-acid chain: Large ribosomal subunit protein bL28 (101 aa).

Belongs to the bacterial ribosomal protein bL28 family.

The chain is Large ribosomal subunit protein bL28 from Caulobacter sp. (strain K31).